The chain runs to 679 residues: Dihydroxyacetone phosphate acyltransferase (679 aa).

Phosphoserine is present on Ser-11. The HXXXXD motif signature appears at 161–166 (HRSYID). Position 642 is an N6-acetyllysine (Lys-642).

Belongs to the GPAT/DAPAT family. Part of a heterotrimeric complex composed of GNPAT, AGPS and a modified form of GNPAT.

It is found in the peroxisome membrane. It carries out the reaction dihydroxyacetone phosphate + an acyl-CoA = a 1-acylglycerone 3-phosphate + CoA. The catalysed reaction is dihydroxyacetone phosphate + hexadecanoyl-CoA = 1-hexadecanoylglycerone 3-phosphate + CoA. The protein operates within membrane lipid metabolism; glycerophospholipid metabolism. Its function is as follows. Dihydroxyacetonephosphate acyltransferase catalyzing the first step in the biosynthesis of plasmalogens, a subset of phospholipids that differ from other glycerolipids by having an alkyl chain attached through a vinyl ether linkage at the sn-1 position of the glycerol backbone, and which unique physical properties have an impact on various aspects of cell signaling and membrane biology. This chain is Dihydroxyacetone phosphate acyltransferase, found in Oryctolagus cuniculus (Rabbit).